We begin with the raw amino-acid sequence, 223 residues long: Putative oxidoreductase MT1904 (223 aa).

4–28 (LVTGGDTDLGRTMAEGFRNDGHKVT) lines the NADP(+) pocket. Residue Ser-128 coordinates substrate.

It belongs to the short-chain dehydrogenases/reductases (SDR) family.

The chain is Putative oxidoreductase MT1904 from Mycobacterium tuberculosis (strain CDC 1551 / Oshkosh).